Reading from the N-terminus, the 219-residue chain is Beta-crystallin B2 (219 aa).

N-acetylalanine is present on A2. The interval 2-16 (ASEHQMPASKQQPAS) is N-terminal arm. Beta/gamma crystallin 'Greek key' domains follow at residues 17–56 (PNIA…LVHS) and 57–101 (GPWV…RPIK). The segment at 102-120 (VVRAPRQPLPTRQTKDSQE) is connecting peptide. Beta/gamma crystallin 'Greek key' domains follow at residues 121-162 (HKIV…RVQS) and 163-205 (GTWV…RRIR). The C-terminal arm stretch occupies residues 207–219 (MQWHQRGAYHPSN).

This sequence belongs to the beta/gamma-crystallin family. In terms of assembly, homo/heterodimer, or complexes of higher-order. The structure of beta-crystallin oligomers seems to be stabilized through interactions between the N-terminal arms.

In terms of biological role, crystallins are the dominant structural components of the vertebrate eye lens. In Gallus gallus (Chicken), this protein is Beta-crystallin B2 (CRYBB2).